A 199-amino-acid chain; its full sequence is Superoxide dismutase [Cu-Zn] (199 aa).

The N-terminal stretch at 1 to 22 (MKLTKVALFSLGLFGFSSMALA) is a signal peptide. Positions 92, 94, and 117 each coordinate Cu cation. Cysteine 99 and cysteine 195 are oxidised to a cystine. Positions 117, 126, 135, and 138 each coordinate Zn(2+). Residue histidine 173 coordinates Cu cation.

This sequence belongs to the Cu-Zn superoxide dismutase family. Homodimer. It depends on Cu cation as a cofactor. Requires Zn(2+) as cofactor.

The protein localises to the periplasm. It carries out the reaction 2 superoxide + 2 H(+) = H2O2 + O2. Functionally, destroys radicals which are normally produced within the cells and which are toxic to biological systems. May play a role in the interactive biology of organisms with their hosts and so contribute to their capacity to cause disease. The chain is Superoxide dismutase [Cu-Zn] (sodC) from Haemophilus ducreyi (strain 35000HP / ATCC 700724).